The following is a 271-amino-acid chain: Cell division protein FtsQ (271 aa).

Residues 1 to 37 form a disordered region; it reads MAAGPTTAEKSGASGAKRSSKGSSDGPSRPGTRNRKF. Residues 1-43 are Cytoplasmic-facing; it reads MAAGPTTAEKSGASGAKRSSKGSSDGPSRPGTRNRKFRMPGTR. The span at 8–24 shows a compositional bias: low complexity; sequence AEKSGASGAKRSSKGSS. Residues 44–64 traverse the membrane as a helical segment; sequence ALLITLGVLLLVAGGLWALYG. The Extracellular segment spans residues 65–271; the sequence is STWFRVERVK…APTAPASSGS (207 aa). The POTRA domain maps to 68 to 137; the sequence is FRVERVKTSG…HGIGLKVTER (70 aa).

Belongs to the FtsQ/DivIB family. FtsQ subfamily.

It is found in the cell membrane. Its function is as follows. Essential cell division protein. This is Cell division protein FtsQ from Streptomyces venezuelae (strain ATCC 10712 / CBS 650.69 / DSM 40230 / JCM 4526 / NBRC 13096 / PD 04745).